Reading from the N-terminus, the 353-residue chain is MTVVLDRRKSENLWGRFCNWITSTENRLYIGWFGVLMIPTLLTATSVFLIAFIAAPPVDIDGIREPVSGSLLYGNNIISGAIIPTSAAIGLHFYPIWEAASIAEWLYNGGPYELIVLHFLLGVACYMGREWELSFRLGMRPWIAIAYSAPVAAATAVFLIYPIGQGSFSDGMPLGISGTFNFMIVFQAEHNILMHPFHMLGVAGVFGGSLFSAMHGSLVTSSLIRETTESESANKGYKFGQEEETYNIVAAHGYFGRLIFQYASFNNSRSLHFFLAAWPVIGIWFTALGISTMAFNLNGFNFNQSVVDSKGHVINTWADIINRANLGMEVMHERNAHNFPLDLATFEVSATNA.

Threonine 2 bears the N-acetylthreonine mark. Residue threonine 2 is modified to Phosphothreonine. Transmembrane regions (helical) follow at residues 29–46 (YIGW…TATS), 118–133 (HFLL…EWEL), and 142–156 (WIAI…AATA). Residue histidine 118 participates in chlorophyll a binding. Tyrosine 126 is a binding site for pheophytin a. 2 residues coordinate [CaMn4O5] cluster: aspartate 170 and glutamate 189. The chain crosses the membrane as a helical span at residues 197 to 218 (FHMLGVAGVFGGSLFSAMHGSL). Position 198 (histidine 198) interacts with chlorophyll a. A quinone contacts are provided by residues histidine 215 and 264–265 (SF). Residue histidine 215 participates in Fe cation binding. Residue histidine 272 coordinates Fe cation. Residues 274–288 (FLAAWPVIGIWFTAL) form a helical membrane-spanning segment. [CaMn4O5] cluster is bound by residues histidine 332, glutamate 333, aspartate 342, and alanine 344. Residues 345–353 (TFEVSATNA) constitute a propeptide that is removed on maturation.

This sequence belongs to the reaction center PufL/M/PsbA/D family. As to quaternary structure, PSII is composed of 1 copy each of membrane proteins PsbA, PsbB, PsbC, PsbD, PsbE, PsbF, PsbH, PsbI, PsbJ, PsbK, PsbL, PsbM, PsbT, PsbX, PsbY, PsbZ, Psb30/Ycf12, at least 3 peripheral proteins of the oxygen-evolving complex and a large number of cofactors. It forms dimeric complexes. Requires The D1/D2 heterodimer binds P680, chlorophylls that are the primary electron donor of PSII, and subsequent electron acceptors. It shares a non-heme iron and each subunit binds pheophytin, quinone, additional chlorophylls, carotenoids and lipids. D1 provides most of the ligands for the Mn4-Ca-O5 cluster of the oxygen-evolving complex (OEC). There is also a Cl(-1) ion associated with D1 and D2, which is required for oxygen evolution. The PSII complex binds additional chlorophylls, carotenoids and specific lipids. as cofactor. In terms of processing, tyr-161 forms a radical intermediate that is referred to as redox-active TyrZ, YZ or Y-Z. C-terminally processed by CTPA; processing is essential to allow assembly of the oxygen-evolving complex and thus photosynthetic growth.

Its subcellular location is the plastid membrane. It catalyses the reaction 2 a plastoquinone + 4 hnu + 2 H2O = 2 a plastoquinol + O2. Photosystem II (PSII) is a light-driven water:plastoquinone oxidoreductase that uses light energy to abstract electrons from H(2)O, generating O(2) and a proton gradient subsequently used for ATP formation. It consists of a core antenna complex that captures photons, and an electron transfer chain that converts photonic excitation into a charge separation. The D1/D2 (PsbA/PsbD) reaction center heterodimer binds P680, the primary electron donor of PSII as well as several subsequent electron acceptors. The sequence is that of Photosystem II protein D1 from Cuscuta gronovii (Common dodder).